The sequence spans 90 residues: Small ribosomal subunit protein bS16 (90 aa).

This sequence belongs to the bacterial ribosomal protein bS16 family.

This is Small ribosomal subunit protein bS16 from Streptococcus equi subsp. zooepidemicus (strain H70).